The sequence spans 641 residues: Threonine--tRNA ligase (641 aa).

A TGS domain is found at 1–61 (MPVITLPDGS…ENDTELAIVT (61 aa)). The catalytic stretch occupies residues 242–533 (DHRKIGKKLG…LIEEYEGAFP (292 aa)). 3 residues coordinate Zn(2+): Cys333, His384, and His510.

Belongs to the class-II aminoacyl-tRNA synthetase family. Homodimer. Zn(2+) is required as a cofactor.

The protein localises to the cytoplasm. It catalyses the reaction tRNA(Thr) + L-threonine + ATP = L-threonyl-tRNA(Thr) + AMP + diphosphate + H(+). Catalyzes the attachment of threonine to tRNA(Thr) in a two-step reaction: L-threonine is first activated by ATP to form Thr-AMP and then transferred to the acceptor end of tRNA(Thr). Also edits incorrectly charged L-seryl-tRNA(Thr). The chain is Threonine--tRNA ligase from Marinobacter nauticus (strain ATCC 700491 / DSM 11845 / VT8) (Marinobacter aquaeolei).